We begin with the raw amino-acid sequence, 406 residues long: Argininosuccinate synthase (406 aa).

ATP-binding positions include 11–19 (AYSGGLDTS) and Ala38. 2 residues coordinate L-citrulline: Tyr91 and Ser96. Gly121 provides a ligand contact to ATP. Positions 123, 127, and 128 each coordinate L-aspartate. Residue Asn127 participates in L-citrulline binding. Residues Arg131, Ser181, Ser190, Glu266, and Tyr278 each coordinate L-citrulline.

The protein belongs to the argininosuccinate synthase family. Type 1 subfamily. As to quaternary structure, homotetramer.

It localises to the cytoplasm. The enzyme catalyses L-citrulline + L-aspartate + ATP = 2-(N(omega)-L-arginino)succinate + AMP + diphosphate + H(+). It participates in amino-acid biosynthesis; L-arginine biosynthesis; L-arginine from L-ornithine and carbamoyl phosphate: step 2/3. The sequence is that of Argininosuccinate synthase from Campylobacter jejuni subsp. jejuni serotype O:23/36 (strain 81-176).